Here is a 192-residue protein sequence, read N- to C-terminus: MAVVKSSEIEKGSFLLIKGAPHIVLEREFSKTGRGGAIVRLKLKNLKNKFVIRETLKGADTAEAIEIYEASVQYLYKDKDVLVFMDLETYDQISLDLKENANFQDKVLFLQESEIYSLIMFDNVVIDIKLAPKIAFEVVEVEAAVKGDTVTNAMKNITLNTGLIIKAPLFINVGDKVLVNSETKEYAERIKN.

The protein belongs to the elongation factor P family.

It is found in the cytoplasm. It participates in protein biosynthesis; polypeptide chain elongation. In terms of biological role, involved in peptide bond synthesis. Stimulates efficient translation and peptide-bond synthesis on native or reconstituted 70S ribosomes in vitro. Probably functions indirectly by altering the affinity of the ribosome for aminoacyl-tRNA, thus increasing their reactivity as acceptors for peptidyl transferase. The protein is Elongation factor P of Borreliella afzelii (strain PKo) (Borrelia afzelii).